The chain runs to 380 residues: Cytochrome b (380 aa).

Helical transmembrane passes span Phe33 to Met53, Trp77 to Val98, Trp113 to Leu133, and Phe178 to Leu198. Heme b is bound by residues His83 and His97. Heme b contacts are provided by His182 and His196. Residue His201 participates in a ubiquinone binding. The next 4 helical transmembrane spans lie at Tyr226–Ser246, Leu288–His308, Leu320–Gly340, and Phe347–Pro367.

This sequence belongs to the cytochrome b family. In terms of assembly, the cytochrome bc1 complex contains 3 respiratory subunits (MT-CYB, CYC1 and UQCRFS1), 2 core proteins (UQCRC1 and UQCRC2) and probably 6 low-molecular weight proteins. Requires heme b as cofactor.

It is found in the mitochondrion inner membrane. Component of the ubiquinol-cytochrome c reductase complex (complex III or cytochrome b-c1 complex) that is part of the mitochondrial respiratory chain. The b-c1 complex mediates electron transfer from ubiquinol to cytochrome c. Contributes to the generation of a proton gradient across the mitochondrial membrane that is then used for ATP synthesis. This chain is Cytochrome b (mt-cyb), found in Neocyttus rhomboidalis (Spiky oreo dory).